The following is a 369-amino-acid chain: Bi-functional coumaroyl CoA and feruloyl CoA ortho-hydroxylase Diox2 (369 aa).

The Fe2OG dioxygenase domain occupies G215–P318. Y224 is a binding site for 2-oxoglutarate. H239, D241, and H299 together coordinate Fe cation. 2-oxoglutarate is bound by residues R309 and S311.

Belongs to the iron/ascorbate-dependent oxidoreductase family. It depends on L-ascorbate as a cofactor. Requires Fe(2+) as cofactor.

The enzyme catalyses (E)-4-coumaroyl-CoA + 2-oxoglutarate + O2 = (E)-2,4-dihydroxycinnamoyl-CoA + succinate + CO2. The catalysed reaction is (E)-feruloyl-CoA + 2-oxoglutarate + O2 = (E)-6-hydroxyferuloyl-CoA + succinate + CO2. It participates in phenylpropanoid metabolism. Its function is as follows. 2-oxoglutarate (OG)- and Fe(II)-dependent dioxygenase (2OGD) involved in scopoletin and umbelliferone biosynthesis. Converts feruloyl CoA into 6'-hydroxyferuloyl CoA, and p-coumaroyl CoA into 2,4-dihydroxycinnamoyl-CoA. This Ruta graveolens (Common rue) protein is Bi-functional coumaroyl CoA and feruloyl CoA ortho-hydroxylase Diox2.